The sequence spans 1235 residues: MFSGGGGPLSPGGKSAARAASGFFAPAGPRGAGRGPPPCLRQNFYNPYLAPVGTQQKPTGPTQRHTYYSECDEFRFIAPRVLDEDAPPEKRAGVHDGHLKRAPKVYCGGDERDVLRVGSGGFWPRRSRLWGGVDHAPAGFNPTVTVFHVYDILENVEHAYGMRAAQFHARFMDAITPTGTVITLLGLTPEGHRVAVHVYGTRQYFYMNKEEVDRHLQCRAPRDLCERMAAALRESPGASFRGISADHFEAEVVERTDVYYYETRPALFYRVYVRSGRVLSYLCDNFCPAIKKYEGGVDATTRFILDNPGFVTFGWYRLKPGRNNTLAQPRAPMAFGTSSDVEFNCTADNLAIEGGMSDLPAYKLMCFDIECKAGGEDELAFPVAGHPEDLVIQISCLLYDLSTTALEHVLLFSLGSCDLPESHLNELAARGLPTPVVLEFDSEFEMLLAFMTLVKQYGPEFVTGYNIINFDWPFLLAKLTDIYKVPLDGYGRMNGRGVFRVWDIGQSHFQKRSKIKVNGMVSIDMYGIITDKIKLSSYKLNAVAEAVLKDKKKDLSYRDIPAYYAAGPAQRGVIGEYCIQDSLLVGQLFFKFLPHLELSAVARLAGINITRTIYDGQQIRVFTCLLRLADQKGFILPDTQGRFRGAGGEAPKRPAAAREDEERPEEEGEDEDEREEGGGEREPDGARETAGRHVGYQGARVLDPTSGFHVNPVVVFDFASLYPSIIQAHNLCFSTLSLRADAVAHLEAGKDYLEIEVGGRRLFFVKAHVRESLLSILLRDWLAMRKQIRSRIPQSSPEEAVLLDKQQAAIKVVCNSVYGFTGVQHGLLPCLHVAATVTTIGREMLLATREYVHARWAAFEQLLADFPEAADMRAPGPYSMRIIYGDTDSIFVLCRGLTAAGLTAMGDKMASHISRALFLPPIKLECEKTFTKLLLIAKKKYIGVIYGGKMLIKGVDLVRKNNCAFINRTSRALVDLLFYDDTVSGAAAALAERPAEEWLARPLPEGLQAFGAVLVDAHRRITDPERDIQDFVLTAELSRHPRAYTNKRLAHLTVYYKLMARRAQVPSIKDRIPYVIVAQTREVEETVARLAALRELDAAAPGDEPAPPAALPSPAKRPRETPSPADPPGGASKPRKLLVSELAEDPAYAIAHGVALNTDYYFSHLLGAACVTFKALFGNNAKITESLLKRFIPEVWHPPDDVTARLRAAGFGAVGAGATAEETRRMLHRAFDTLA.

2 disordered regions span residues 640–691 and 1098–1134; these read QGRF…ETAG and AAAP…ASKP. Over residues 650 to 661 the composition is skewed to basic and acidic residues; the sequence is APKRPAAAREDE. Residues 662–675 show a composition bias toward acidic residues; it reads ERPEEEGEDEDERE. Residues 676 to 691 are compositionally biased toward basic and acidic residues; it reads EGGGEREPDGARETAG.

The protein belongs to the DNA polymerase type-B family. As to quaternary structure, forms a complex with the ssDNA-binding protein UL29, the DNA polymerase processivity factor, and the alkaline exonuclease. Interacts with the putative helicase-primase complex subunit UL8; this interaction may coordinate leading and lagging strand DNA synthesis at the replication fork.

It localises to the host nucleus. The enzyme catalyses DNA(n) + a 2'-deoxyribonucleoside 5'-triphosphate = DNA(n+1) + diphosphate. It carries out the reaction Endonucleolytic cleavage to 5'-phosphomonoester.. Functionally, replicates viral genomic DNA. The replication complex is composed of six viral proteins: the DNA polymerase, processivity factor, primase, primase-associated factor, helicase, and ssDNA-binding protein. Additionally, the polymerase contains an intrinsic ribonuclease H (RNase H) activity that specifically degrades RNA/DNA heteroduplexes or duplex DNA substrates in the 5' to 3' direction. Therefore, it can catalyze the excision of the RNA primers that initiate the synthesis of Okazaki fragments at a replication fork during viral DNA replication. The sequence is that of DNA polymerase catalytic subunit from Homo sapiens (Human).